The primary structure comprises 328 residues: Nicotianamine synthase 1 (328 aa).

Belongs to the nicotianamine synthase (NAS)-like family. As to expression, in roots but not in leaves.

It catalyses the reaction 3 S-adenosyl-L-methionine = nicotianamine + 3 S-methyl-5'-thioadenosine + 3 H(+). In terms of biological role, synthesizes nicotianamine, a polyamine that is the first intermediate in the synthesis of the phytosiderophores of the mugineic acid type found in gramineae which serves as a sensor for the physiological iron status within the plant, and/or might be involved in the transport of iron. This Hordeum vulgare (Barley) protein is Nicotianamine synthase 1 (NAS1).